Here is a 335-residue protein sequence, read N- to C-terminus: Holliday junction branch migration complex subunit RuvB (335 aa).

A large ATPase domain (RuvB-L) region spans residues Met-1–Tyr-183. Residues Leu-22, Arg-23, Gly-64, Lys-67, Thr-68, Thr-69, Glu-130 to Tyr-132, Arg-173, Tyr-183, and Arg-220 each bind ATP. Thr-68 is a Mg(2+) binding site. Residues Thr-184 to Gln-254 form a small ATPAse domain (RuvB-S) region. Residues Pro-257 to Val-335 form a head domain (RuvB-H) region. Arg-293, Arg-312, and Arg-317 together coordinate DNA.

It belongs to the RuvB family. As to quaternary structure, homohexamer. Forms an RuvA(8)-RuvB(12)-Holliday junction (HJ) complex. HJ DNA is sandwiched between 2 RuvA tetramers; dsDNA enters through RuvA and exits via RuvB. An RuvB hexamer assembles on each DNA strand where it exits the tetramer. Each RuvB hexamer is contacted by two RuvA subunits (via domain III) on 2 adjacent RuvB subunits; this complex drives branch migration. In the full resolvosome a probable DNA-RuvA(4)-RuvB(12)-RuvC(2) complex forms which resolves the HJ.

The protein localises to the cytoplasm. The enzyme catalyses ATP + H2O = ADP + phosphate + H(+). The RuvA-RuvB-RuvC complex processes Holliday junction (HJ) DNA during genetic recombination and DNA repair, while the RuvA-RuvB complex plays an important role in the rescue of blocked DNA replication forks via replication fork reversal (RFR). RuvA specifically binds to HJ cruciform DNA, conferring on it an open structure. The RuvB hexamer acts as an ATP-dependent pump, pulling dsDNA into and through the RuvAB complex. RuvB forms 2 homohexamers on either side of HJ DNA bound by 1 or 2 RuvA tetramers; 4 subunits per hexamer contact DNA at a time. Coordinated motions by a converter formed by DNA-disengaged RuvB subunits stimulates ATP hydrolysis and nucleotide exchange. Immobilization of the converter enables RuvB to convert the ATP-contained energy into a lever motion, pulling 2 nucleotides of DNA out of the RuvA tetramer per ATP hydrolyzed, thus driving DNA branch migration. The RuvB motors rotate together with the DNA substrate, which together with the progressing nucleotide cycle form the mechanistic basis for DNA recombination by continuous HJ branch migration. Branch migration allows RuvC to scan DNA until it finds its consensus sequence, where it cleaves and resolves cruciform DNA. This Listeria welshimeri serovar 6b (strain ATCC 35897 / DSM 20650 / CCUG 15529 / CIP 8149 / NCTC 11857 / SLCC 5334 / V8) protein is Holliday junction branch migration complex subunit RuvB.